We begin with the raw amino-acid sequence, 104 residues long: Guanidinium exporter (104 aa).

Residue M1 is a topological domain, cytoplasmic. Residues 2–19 (AWIILVIAGLLEVIWAIG) form a helical membrane-spanning segment. The Periplasmic portion of the chain corresponds to 20–28 (LKYSHGFSR). A helical transmembrane segment spans residues 29 to 48 (LTPSIITLVAMAASVFLLAY). Over 49–54 (AMKSLP) the chain is Cytoplasmic. A helical transmembrane segment spans residues 55 to 77 (AGTAYAVWTGIGAVGTAILGIVL). The Periplasmic segment spans residues 78-81 (LGES). The helical transmembrane segment at 82-100 (ASLARILSLGLILAGIIGL) threads the bilayer. At 101–104 (KLAS) the chain is on the cytoplasmic side.

Belongs to the drug/metabolite transporter (DMT) superfamily. Small multidrug resistance (SMR) (TC 2.A.7.1) family. Gdx/SugE subfamily.

Its subcellular location is the cell inner membrane. Its function is as follows. Guanidinium ion exporter. Couples guanidinium export to the proton motive force, exchanging one guanidinium ion for two protons. This Yersinia pestis protein is Guanidinium exporter.